Here is a 247-residue protein sequence, read N- to C-terminus: PF03932 family protein CutC (247 aa).

Belongs to the CutC family.

The protein localises to the cytoplasm. The sequence is that of PF03932 family protein CutC from Vibrio campbellii (strain ATCC BAA-1116).